The sequence spans 66 residues: Photosystem II reaction center protein H (66 aa).

A helical membrane pass occupies residues 27 to 47 (GAVPIMTVIGLLLLVFLVILL).

It belongs to the PsbH family. In terms of assembly, PSII is composed of 1 copy each of membrane proteins PsbA, PsbB, PsbC, PsbD, PsbE, PsbF, PsbH, PsbI, PsbJ, PsbK, PsbL, PsbM, PsbT, PsbX, PsbY, Psb30/Ycf12, peripheral proteins PsbO, CyanoQ (PsbQ), PsbU, PsbV and a large number of cofactors. It forms dimeric complexes.

It localises to the cellular thylakoid membrane. Its function is as follows. One of the components of the core complex of photosystem II (PSII), required for its stability and/or assembly. PSII is a light-driven water:plastoquinone oxidoreductase that uses light energy to abstract electrons from H(2)O, generating O(2) and a proton gradient subsequently used for ATP formation. It consists of a core antenna complex that captures photons, and an electron transfer chain that converts photonic excitation into a charge separation. This chain is Photosystem II reaction center protein H, found in Prochlorococcus marinus (strain MIT 9515).